A 109-amino-acid chain; its full sequence is UPF0060 membrane protein PSPA7_1846 (109 aa).

The next 4 helical transmembrane spans lie at 5–25, 27–47, 59–79, and 84–104; these read LWFV…YLWL, LGKS…FALL, AYAA…AFVE, and LWSD…VLFG.

Belongs to the UPF0060 family.

It is found in the cell inner membrane. This Pseudomonas paraeruginosa (strain DSM 24068 / PA7) (Pseudomonas aeruginosa (strain PA7)) protein is UPF0060 membrane protein PSPA7_1846.